Consider the following 217-residue polypeptide: Protein OPI10 homolog (217 aa).

The protein belongs to the OPI10 family.

This is Protein OPI10 homolog from Dictyostelium discoideum (Social amoeba).